The sequence spans 263 residues: uncharacterized protein (263 aa).

Residues 53 to 89 (SAVTASKFSPDGRWLVNLTDQGYVQLWDVHKGERVKT) form a WD repeat.

This is an uncharacterized protein from Deinococcus radiodurans (strain ATCC 13939 / DSM 20539 / JCM 16871 / CCUG 27074 / LMG 4051 / NBRC 15346 / NCIMB 9279 / VKM B-1422 / R1).